Here is a 139-residue protein sequence, read N- to C-terminus: MKPAARRRARECAVQALYSWQLSRNDIADVEYQFLAEQDVKDVDVLYFRELLAGVATNTAYLDGLMKPYLSRLLEELGQVEKAVLRIALFELSKRSDVPYKVAINEAIELAKTFGAEDSHKFVNGVLDKAAPVIRPNKK.

It belongs to the NusB family.

Functionally, involved in transcription antitermination. Required for transcription of ribosomal RNA (rRNA) genes. Binds specifically to the boxA antiterminator sequence of the ribosomal RNA (rrn) operons. The protein is Transcription antitermination protein NusB of Escherichia fergusonii (strain ATCC 35469 / DSM 13698 / CCUG 18766 / IAM 14443 / JCM 21226 / LMG 7866 / NBRC 102419 / NCTC 12128 / CDC 0568-73).